A 442-amino-acid chain; its full sequence is Membrane sensor protein UhpC (442 aa).

Residues 1 to 30 (MLSFLKAPANAPLITDKHEVDARYRYWRRH) lie on the Cytoplasmic side of the membrane. The chain crosses the membrane as a helical span at residues 31 to 51 (ILITIWLGYALFYFTRKSFNA). Over 52 to 66 (AAPEILASGILTRSD) the chain is Periplasmic. Residues 67 to 87 (IGLLATLFYITYGVSKFVSGI) form a helical membrane-spanning segment. The Cytoplasmic segment spans residues 88–95 (VSDRSNAR). Residues 96 to 118 (YFMGIGLIATGVVNILFGFSTSL) form a helical membrane-spanning segment. Residues 119–121 (WAF) are Periplasmic-facing. Residues 122–144 (ALLWALNAFFQGFGSPVCARLLT) traverse the membrane as a helical segment. The Cytoplasmic portion of the chain corresponds to 145–162 (AWYSRTERGGWWALWNTA). A helical transmembrane segment spans residues 163-183 (HNVGGALIPLVMAAVALHYGW). R184 is a topological domain (periplasmic). A helical transmembrane segment spans residues 185-205 (VGMMVAGLLAIGVGMVLCWRL). The Cytoplasmic portion of the chain corresponds to 206 to 244 (RDRPQAIGLPPVGDWRHDALEVAQQQEGAGLSRKEILAK). A helical transmembrane segment spans residues 245-265 (YVLLNPYIWLLSLCYVLVYVV). At 266-289 (RAAINDWGNLYMSETLGVDLVTAN) the chain is on the periplasmic side. Residues 290–310 (TAVSMFELGGFIGALVAGWGS) traverse the membrane as a helical segment. Residues 311–322 (DKLFNGNRGPMN) lie on the Cytoplasmic side of the membrane. The chain crosses the membrane as a helical span at residues 323 to 343 (LIFAAGILLSVGSLWLMPFAS). Topologically, residues 344 to 347 (YVMQ) are periplasmic. A helical transmembrane segment spans residues 348 to 368 (AACFFTTGFFVFGPQMLIGMA). Residues 369 to 379 (AAECSHKEAAG) are Cytoplasmic-facing. A helical transmembrane segment spans residues 380–400 (AATGFVGLFAYLGASLSGWPL). Residues 401 to 410 (AKVLEIWHWT) are Periplasmic-facing. Residues 411–431 (GFFAVIAIAAGISALLLLPFL) form a helical membrane-spanning segment. The Cytoplasmic portion of the chain corresponds to 432-442 (NAQAPRETHEA).

The protein belongs to the major facilitator superfamily. Organophosphate:Pi antiporter (OPA) (TC 2.A.1.4) family.

It localises to the cell inner membrane. Part of the UhpABC signaling cascade that controls the expression of the hexose phosphate transporter UhpT. UhpC senses external glucose-6-phosphate and interacts with the histidine kinase UhpB, leading to the stimulation of the autokinase activity of UhpB. The protein is Membrane sensor protein UhpC (uhpC) of Salmonella typhimurium (strain LT2 / SGSC1412 / ATCC 700720).